The primary structure comprises 123 residues: Aberrant microtubules protein 1 (123 aa).

Its function is as follows. Required for normal microtubule organization. This chain is Aberrant microtubules protein 1 (ABM1), found in Saccharomyces cerevisiae (strain ATCC 204508 / S288c) (Baker's yeast).